Consider the following 313-residue polypeptide: Ribosomal RNA small subunit methyltransferase H (313 aa).

S-adenosyl-L-methionine contacts are provided by residues 34 to 36 (GGH), aspartate 55, phenylalanine 82, aspartate 103, and glutamine 110.

This sequence belongs to the methyltransferase superfamily. RsmH family.

Its subcellular location is the cytoplasm. The enzyme catalyses cytidine(1402) in 16S rRNA + S-adenosyl-L-methionine = N(4)-methylcytidine(1402) in 16S rRNA + S-adenosyl-L-homocysteine + H(+). Specifically methylates the N4 position of cytidine in position 1402 (C1402) of 16S rRNA. The chain is Ribosomal RNA small subunit methyltransferase H from Pelobacter propionicus (strain DSM 2379 / NBRC 103807 / OttBd1).